The chain runs to 171 residues: S-ribosylhomocysteine lyase (171 aa).

3 residues coordinate Fe cation: histidine 54, histidine 58, and cysteine 128.

This sequence belongs to the LuxS family. Homodimer. Requires Fe cation as cofactor.

The enzyme catalyses S-(5-deoxy-D-ribos-5-yl)-L-homocysteine = (S)-4,5-dihydroxypentane-2,3-dione + L-homocysteine. Its function is as follows. Involved in the synthesis of autoinducer 2 (AI-2) which is secreted by bacteria and is used to communicate both the cell density and the metabolic potential of the environment. The regulation of gene expression in response to changes in cell density is called quorum sensing. Catalyzes the transformation of S-ribosylhomocysteine (RHC) to homocysteine (HC) and 4,5-dihydroxy-2,3-pentadione (DPD). In Escherichia coli O157:H7, this protein is S-ribosylhomocysteine lyase.